Consider the following 587-residue polypeptide: Protein cereblon (587 aa).

Disordered regions lie at residues 1-56 (MDEE…PAEY), 78-113 (DVLQDDTASEGSHPSSDMSLESPGSEDDSDVQGLPN), and 157-195 (FSQERRRSRTSEETSQEEAAEEPDDPPPQQPPLPPIDIG). Polar residues-rich tracts occupy residues 22–31 (EDQSQSQGLQ) and 86–96 (SEGSHPSSDMS). Positions 159–168 (QERRRSRTSE) are enriched in basic and acidic residues. The segment covering 170–181 (TSQEEAAEEPDD) has biased composition (acidic residues). Positions 182–191 (PPPQQPPLPP) are enriched in pro residues. A Lon N-terminal domain is found at 227–453 (HMLIFLHHHI…LIKSTFKDET (227 aa)). The CULT domain occupies 452-561 (ETLFFCRYCN…LSGSSVRIGK (110 aa)). Zn(2+)-binding residues include Cys-457, Cys-460, Cys-526, and Cys-529.

The protein belongs to the CRBN family. In terms of assembly, likely a component of a DCX (DDB1-CUL4-X-box) protein ligase complex. May interact with pic/DDB1. Post-translationally, ubiquitinated.

It localises to the nucleus. Its pathway is protein modification; protein ubiquitination. Its function is as follows. Substrate recognition component of a DCX (DDB1-CUL4-X-box) E3 protein ligase complex that mediates the ubiquitination and subsequent proteasomal degradation of target proteins. Has an essential role in mediating growth by negatively regulating insulin signaling. It also has a role in maintaining presynaptic function in the neuromuscular junction synapses of third-instar larvae. This Drosophila simulans (Fruit fly) protein is Protein cereblon.